Here is a 490-residue protein sequence, read N- to C-terminus: MEHPLEIYNTLHRKKERFEPIHKPHVGLYVCGPTVYGDAHLGHARPAITFDLLYRYLRHLGYQVRYVRNITDVGHLEHDADEGEDKIAKKARLEQLEPMEVVQYYLTRYRHAMEALNVLPPSIEPMASGHIIEQIELVKQILKAGYAYESCGSVYFDVEKYNQDHRYGVLSGRNIEEMINNTRRLDGQDEKRNGVDFALWKAAQPEHIMRWPSPWGMGFPGWHCECTAMGRKYLGEEFDIHGGGMDLVFPHHECEIAQAVASQGHPIVRYWMHNNMITINGQKMGKSLGNFITLEEFFSGAHPSLNKAYSPMTIRFFILGAHYRGTVDFSNEALEAAEKGLERLLDAAALLDGLKTADTTSVEVGDLRKRCYDAMNDDLNSPMVIAALFDAARAINAVHNGQGTITSSNLEELRTTFRLFLFDLLGMRDERASSAGGSEAFGKAMDLLLSIRAEAKARKDWATSDKIRDELTALGFTIKDTKDGAEWKLN.

Cys-31 contacts Zn(2+). Positions 33–43 (PTVYGDAHLGH) match the 'HIGH' region motif. Residues Cys-226, His-251, and Glu-255 each coordinate Zn(2+). The 'KMSKS' region motif lies at 283–287 (KMGKS). Lys-286 is an ATP binding site.

Belongs to the class-I aminoacyl-tRNA synthetase family. In terms of assembly, monomer. Zn(2+) is required as a cofactor.

Its subcellular location is the cytoplasm. It catalyses the reaction tRNA(Cys) + L-cysteine + ATP = L-cysteinyl-tRNA(Cys) + AMP + diphosphate. The sequence is that of Cysteine--tRNA ligase from Porphyromonas gingivalis (strain ATCC BAA-308 / W83).